The sequence spans 246 residues: Small ribosomal subunit protein uS2 (246 aa).

The disordered stretch occupies residues 225 to 246; sequence SKSSASVPNKDEYVAAEDGAAE.

The protein belongs to the universal ribosomal protein uS2 family.

The sequence is that of Small ribosomal subunit protein uS2 from Cellvibrio japonicus (strain Ueda107) (Pseudomonas fluorescens subsp. cellulosa).